A 225-amino-acid polypeptide reads, in one-letter code: MSTCLPIVERFHSLQGEGLHFGKSAFFIRLGGCKVGCPWCDTKESWSIATHQEATVEELSKEAAIAQSQGAAILVITGGEPLHHNLNALCKTIQDFTSHNSRETMPIHLETSGVDEITGLINWITLSPKRHALPKKSLLRACDEIKVVIHQKEDLLFAEEMANQSIKERQISKKTSDENHKISQPHLFLQPGWNSKEGTQLTIEYIKSHPQWRLSLQTHKWLGVL.

Residues 14-16 (LQG) and Arg29 contribute to the substrate site. Residues 20–225 (HFGKSAFFIR…LQTHKWLGVL (206 aa)) form the Radical SAM core domain. The [4Fe-4S] cluster site is built by Cys33, Cys37, and Cys40. Thr42 serves as a coordination point for Mg(2+). Thr77 is a binding site for substrate. S-adenosyl-L-methionine contacts are provided by residues Gly79 and 127–129 (SPK).

It belongs to the radical SAM superfamily. 7-carboxy-7-deazaguanine synthase family. Homodimer. It depends on [4Fe-4S] cluster as a cofactor. The cofactor is S-adenosyl-L-methionine. Requires Mg(2+) as cofactor.

It carries out the reaction 6-carboxy-5,6,7,8-tetrahydropterin + H(+) = 7-carboxy-7-deazaguanine + NH4(+). Its pathway is purine metabolism; 7-cyano-7-deazaguanine biosynthesis. Its function is as follows. Catalyzes the complex heterocyclic radical-mediated conversion of 6-carboxy-5,6,7,8-tetrahydropterin (CPH4) to 7-carboxy-7-deazaguanine (CDG), a step common to the biosynthetic pathways of all 7-deazapurine-containing compounds. The chain is 7-carboxy-7-deazaguanine synthase from Prochlorococcus marinus (strain SARG / CCMP1375 / SS120).